The chain runs to 278 residues: Leucine-rich repeat-containing protein 10 (278 aa).

LRR repeat units lie at residues 30-51 (LDRM…VCSF), 52-74 (QELV…LGQL), 76-97 (NLQI…VCTL), 98-121 (KQLC…SLLQ), 123-143 (LRTL…VCEL), 144-166 (SLLK…LQRL), 167-189 (RELR…LLHM), and 191-213 (FLEI…HLSS). Residues 239-250 (RWAEETPEPDPR) show a composition bias toward basic and acidic residues. The interval 239–278 (RWAEETPEPDPRKARRYALAREESQEAQLPALPPLPPTNS) is disordered. The segment covering 269–278 (ALPPLPPTNS) has biased composition (pro residues).

The protein resides in the nucleus. Functionally, may play important roles in cardiac development and/or cardiac function. The protein is Leucine-rich repeat-containing protein 10 (LRRC10) of Bos taurus (Bovine).